We begin with the raw amino-acid sequence, 370 residues long: Nociceptin receptor (370 aa).

Topologically, residues 1 to 48 are extracellular; sequence MESLFPAPFWEVLYGSPLQGNLSLLSPNHSLLPPHLLLNASHGAFLPL. 3 N-linked (GlcNAc...) asparagine glycosylation sites follow: Asn21, Asn28, and Asn39. A helical membrane pass occupies residues 49–74; that stretch reads GLKVTIVGLYLAVCVGGLLGNCLVMY. Residues 75-87 lie on the Cytoplasmic side of the membrane; sequence VILRHTKMKTATN. A helical transmembrane segment spans residues 88–109; sequence IYIFNLALADTAVLLTLPFQGT. At 110-124 the chain is on the extracellular side; that stretch reads DVLLGFWPFGNALCK. A disulfide bridge connects residues Cys123 and Cys200. A helical membrane pass occupies residues 125 to 146; the sequence is AVIAIDYYNMFTSAFTLTAMSV. Residues 147–165 are Cytoplasmic-facing; the sequence is DRYVAICHPIRALDVRTSS. A helical transmembrane segment spans residues 166-188; the sequence is KAQAVNVAIWALASIVGVPVAIM. The Extracellular segment spans residues 189–211; that stretch reads GSAQVEDEEIECLVEIPAPQDYW. The helical transmembrane segment at 212–236 threads the bilayer; the sequence is GPVFAVCIFLFSFVIPVLIISVCYS. Over 237 to 264 the chain is Cytoplasmic; it reads LMVRRLRGVRLLSGSREKDRNLRRITRL. Residues 265–285 form a helical membrane-spanning segment; it reads VLVVVAVFVGCWTPVQVFVLV. At 286 to 300 the chain is on the extracellular side; sequence QGLGVQPGSETAVAV. Residues 301–322 traverse the membrane as a helical segment; the sequence is LRFCTALGYVNSCLNPILYAFL. Residues 323–370 are Cytoplasmic-facing; it reads DENFKACFRKFCCAPTRRREMQVSDRVRSIAKDVALACKTSETVPRPA. Cys334 carries the S-palmitoyl cysteine lipid modification.

Belongs to the G-protein coupled receptor 1 family. Phosphorylation at Ser-363 requires GRK3. In terms of tissue distribution, detected in brain cortex, stomach, ileum, jejunum and colon.

The protein localises to the cell membrane. It localises to the cytoplasmic vesicle. In terms of biological role, G-protein coupled opioid receptor that functions as a receptor for the endogenous neuropeptide nociceptin. Ligand binding causes a conformation change that triggers signaling via guanine nucleotide-binding proteins (G proteins) and modulates the activity of down-stream effectors. Signaling via G proteins mediates inhibition of adenylate cyclase activity and calcium channel activity. Arrestins modulate signaling via G proteins and mediate the activation of alternative signaling pathways that lead to the activation of MAP kinases. Plays a role in modulating nociception and the perception of pain. Plays a role in the regulation of locomotor activity by the neuropeptide nociceptin. The protein is Nociceptin receptor (OPRL1) of Sus scrofa (Pig).